We begin with the raw amino-acid sequence, 84 residues long: MQERDILLKIKEIAKAKNFKTELDESVLQKPFRELKIDSLDMFSVIVSLEKEFDIMFEDEKLMQLNNLAELIAEVKHLISQKGV.

The 76-residue stretch at 4 to 79 (RDILLKIKEI…ELIAEVKHLI (76 aa)) folds into the Carrier domain. At serine 39 the chain carries O-(pantetheine 4'-phosphoryl)serine.

In terms of processing, 4'-phosphopantetheine is transferred from CoA to a specific serine of the apo-ACP-like protein.

It participates in lipid metabolism; fatty acid biosynthesis. Its function is as follows. Carrier of the growing fatty acid chain in fatty acid biosynthesis. The sequence is that of Acyl carrier protein homolog from Mycoplasma pneumoniae (strain ATCC 29342 / M129 / Subtype 1) (Mycoplasmoides pneumoniae).